The sequence spans 338 residues: Solute carrier family 35 member G5 (338 aa).

Residues 1 to 21 (MAGSHPYFNLPDSTHPSPPSA) are disordered. A run of 9 helical transmembrane segments spans residues 37–57 (TNGL…VGPL), 67–87 (LPSL…ALPL), 105–125 (CFCA…VQVV), 160–180 (CGLL…LWTL), 190–210 (ALGY…LLVY), 221–241 (TVAF…LFVL), 250–270 (LLSW…FTCV), 281–301 (LVCA…YYVL), and 305–325 (VAPF…IITA). The EamA 1 domain maps to 49–174 (LPAGFVGPLS…SILGLIIIVG (126 aa)). An EamA 2 domain is found at 272 to 325 (YAVTKAHPALVCAVLHSEVVVALILQYYVLHETVAPFDITGAGIVLGSIAIITA).

This sequence belongs to the SLC35G solute transporter family.

It localises to the membrane. The protein is Solute carrier family 35 member G5 (SLC35G5) of Pan paniscus (Pygmy chimpanzee).